A 342-amino-acid chain; its full sequence is Spore photoproduct lyase (342 aa).

The Radical SAM core domain occupies Ser77 to Arg305. [4Fe-4S] cluster-binding residues include Cys91, Cys95, and Cys98. Positions Glu218–Ala235 form a DNA-binding region, H-T-H motif.

The protein belongs to the radical SAM superfamily. SPL family. As to quaternary structure, monomer or homodimer. [4Fe-4S] cluster serves as cofactor. Requires S-adenosyl-L-methionine as cofactor.

The catalysed reaction is (5R)-5,6-dihydro-5-(thymidin-7-yl)thymidine in DNA = a thymidine dimer in DNA. Involved in repair of UV radiation-induced DNA damage during spore germination. Can repair thymine dimer 5-thyminyl-5,6-dihydrothymine (known as spore photoproduct (SP)) by in situ monomerization of SP to two thymines. The sequence is that of Spore photoproduct lyase (splB) from Bacillus subtilis (strain 168).